Consider the following 361-residue polypeptide: Beta-hexosaminidase (361 aa).

Substrate-binding positions include D69, R77, R144, and 174 to 175 (KH). The active-site Proton donor/acceptor is the H187. D258 functions as the Nucleophile in the catalytic mechanism.

Belongs to the glycosyl hydrolase 3 family. NagZ subfamily.

The protein localises to the cytoplasm. It catalyses the reaction Hydrolysis of terminal non-reducing N-acetyl-D-hexosamine residues in N-acetyl-beta-D-hexosaminides.. It participates in cell wall biogenesis; peptidoglycan recycling. In terms of biological role, plays a role in peptidoglycan recycling by cleaving the terminal beta-1,4-linked N-acetylglucosamine (GlcNAc) from peptide-linked peptidoglycan fragments, giving rise to free GlcNAc, anhydro-N-acetylmuramic acid and anhydro-N-acetylmuramic acid-linked peptides. The chain is Beta-hexosaminidase from Neisseria meningitidis serogroup A / serotype 4A (strain DSM 15465 / Z2491).